A 188-amino-acid polypeptide reads, in one-letter code: Ribosome-recycling factor (188 aa).

This sequence belongs to the RRF family.

It is found in the cytoplasm. Functionally, responsible for the release of ribosomes from messenger RNA at the termination of protein biosynthesis. May increase the efficiency of translation by recycling ribosomes from one round of translation to another. The chain is Ribosome-recycling factor from Caulobacter vibrioides (strain NA1000 / CB15N) (Caulobacter crescentus).